The following is a 271-amino-acid chain: Cobalt import ATP-binding protein CbiO (271 aa).

An ABC transporter domain is found at 2-236 (LATSDLWFRY…TEAMEHAGLT (235 aa)). 34–41 (GANGCGKS) contacts ATP.

The protein belongs to the ABC transporter superfamily. Cobalt importer (TC 3.A.1.18.1) family. As to quaternary structure, forms an energy-coupling factor (ECF) transporter complex composed of an ATP-binding protein (A component, CbiO), a transmembrane protein (T component, CbiQ) and 2 possible substrate-capture proteins (S components, CbiM and CbiN) of unknown stoichimetry. Expression of just CbiMN in E.coli confers some cobalt uptake.

Its subcellular location is the cell inner membrane. Its pathway is cofactor biosynthesis; adenosylcobalamin biosynthesis. Its function is as follows. Part of the energy-coupling factor (ECF) transporter complex CbiMNOQ involved in cobalt import. The complex confers cobalt uptake upon expression in E.coli; can also transport nickel with a very low affinity. Presumably responsible for energy coupling to the transport system. This chain is Cobalt import ATP-binding protein CbiO, found in Salmonella typhimurium (strain LT2 / SGSC1412 / ATCC 700720).